The sequence spans 700 residues: MFNIRNTQPSVSMQAIAGAAAPEASPEEIVWEKIQVFFPQENYEEAQQCLAELCHPARGMLPDHISSQFARLKALTFPAWEENIQCNRDGINQFCILDAGSKEILSITLDDAGNYTVNCQGYSEAHDFIMDTEPGEECTEFAEGASGTSLRPATTVSQKAAEYDAVWSKWERDAPAGESPGRAAVVQEMRDCLNNGNPVLNVGASGLTTLPDRLPPHITTLVIPDNNLTSLPELPEGLRELEVSGNLQLTSLPSLPQGLQKLWAYNNWLASLPTLPPGLGDLAVSNNQLTSLPEMPPALRELRVSGNNLTSLPALPSGLQKLWAYNNRLTSLPEMSPGLQELDVSHNQLTRLPQSLTGLSSAARVYLDGNPLSVRTLQALRDIIGHSGIRIHFDMAGPSVPREARALHLAVADWLTSAREGEAAQADRWQAFGLEDNAAAFSLVLDRLRETENFKKDAGFKAQISSWLTQLAEDAALRAKTFAMATEATSTCEDRVTHALHQMNNVQLVHNAEKGEYDNNLQGLVSTGREMFRLATLEQIAREKAGTLALVDDVEVYLAFQNKLKESLELTSVTSEMRFFDVSGVTVSDLQAAELQVKTAENSGFSKWILQWGPLHSVLERKVPERFNALREKQISDYEDTYRKLYDEVLKSSGLVDDTDAERTIGVSAMDSAKKEFLDGLRALVDEVLGSYLTARWRLN.

Residues 1 to 395 are interaction with target proteins; sequence MFNIRNTQPS…HSGIRIHFDM (395 aa). LRR repeat units lie at residues 217-238, 239-257, 258-279, 280-297, 298-319, 320-337, 338-360, and 361-381; these read HITTLVIPDNNLTSLPELPEGL, RELEVSGNLQLTSLPSLPQ, GLQKLWAYNNWLASLPTLPPGL, GDLAVSNNQLTSLPEMPP, ALRELRVSGNNLTSLPALPSGL, QKLWAYNNRLTSLPEMSP, GLQELDVSHNQLTRLPQSLTGLS, and SAARVYLDGNPLSVRTLQALR. A linker region spans residues 396–403; it reads AGPSVPRE. The E3 ubiquitin-protein ligase catalytic domain stretch occupies residues 404–700; sequence ARALHLAVAD…SYLTARWRLN (297 aa). Residues 406 to 700 form the NEL domain; it reads ALHLAVADWL…SYLTARWRLN (295 aa). Cysteine 492 acts as the Glycyl thioester intermediate in catalysis.

This sequence belongs to the LRR-containing bacterial E3 ligase family. As to quaternary structure, interacts (via leucine-rich repeat region) with host PKN1 (via the second REM repeat). Ubiquitinated in the presence of host E1 ubiquitin-activating enzyme, E2 ubiquitin-conjugating enzyme and ubiquitin.

It is found in the secreted. It localises to the host cytoplasm. The protein localises to the host nucleus. The catalysed reaction is S-ubiquitinyl-[E2 ubiquitin-conjugating enzyme]-L-cysteine + [acceptor protein]-L-lysine = [E2 ubiquitin-conjugating enzyme]-L-cysteine + N(6)-ubiquitinyl-[acceptor protein]-L-lysine.. With respect to regulation, exists in an autoinhibited state in the absence of substrate protein, due to interactions of the leucine-rich repeat domain with the catalytic domain. Is activated upon binding to a substrate protein. Effector proteins function to alter host cell physiology and promote bacterial survival in host tissues. This protein is an E3 ubiquitin-protein ligase that interferes with the host's ubiquitination pathway and targets host proteins for proteasomal degradation. Can ubiquitinate ubiquitin, giving rise to polyubiquitin chains (in vitro). Polyubiquitinates host PKN1, leading to its proteasomal degradation. Down-modulates production of host pro-inflammatory cytokines by inhibiting NF-kappa-B-dependent gene expression; this depends only partially on its E3 ubiquitin-protein ligase activity. The chain is E3 ubiquitin-protein ligase SspH1 (sspH1) from Salmonella typhimurium (strain 14028s / SGSC 2262).